The following is a 1309-amino-acid chain: Angiotensin-converting enzyme (1309 aa).

Positions 1-33 (MGAASGCRWPWPPLLPLLLMLLLPPPPLPVALA) are cleaved as a signal peptide. The Extracellular segment spans residues 34-1259 (LDSALQPGNF…GLNLEEQQAR (1226 aa)). N-linked (GlcNAc...) asparagine glycans are attached at residues Asn42, Asn58, Asn78, Asn115, Asn135, Asn150, and Asn164. Peptidase M2 domains follow at residues 44-627 (TADE…LGWP) and 646-1225 (VSDE…LGWP). Cys161 and Cys169 are oxidised to a cystine. Tyr235 lines the chloride pocket. Asn322 carries N-linked (GlcNAc...) asparagine glycosylation. Cysteines 363 and 381 form a disulfide. Residue His394 coordinates Zn(2+). Glu395 (proton acceptor 1) is an active-site residue. Residues His398 and Glu422 each contribute to the Zn(2+) site. N-linked (GlcNAc...) asparagine glycosylation is present at Asn512. His523 serves as the catalytic Proton donor 1. Asn526 is a glycosylation site (N-linked (GlcNAc...) asparagine). Arg532 provides a ligand contact to chloride. Cys548 and Cys560 form a disulfide bridge. Residues Asn680, Asn698, Asn717, and Asn763 are each glycosylated (N-linked (GlcNAc...) asparagine). The cysteines at positions 760 and 766 are disulfide-linked. The chloride site is built by Arg794 and Tyr832. N-linked (GlcNAc...) asparagine glycosylation occurs at Asn945. Residues Cys960 and Cys978 are joined by a disulfide bond. His991 is a Zn(2+) binding site. Glu992 acts as the Proton acceptor 2 in catalysis. Residues His995 and Glu1019 each contribute to the Zn(2+) site. Residues Trp1093 and Arg1097 each coordinate chloride. Residue His1121 is the Proton donor 2 of the active site. Arg1130 contributes to the chloride binding site. The cysteines at positions 1146 and 1158 are disulfide-linked. Residues Asn1194 and Asn1228 are each glycosylated (N-linked (GlcNAc...) asparagine). The interval 1218 to 1259 (HGEKLGWPQYNWTPNSARLEGSFAGTGRVNFLGLNLEEQQAR) is juxtamembrane stalk. A helical membrane pass occupies residues 1260 to 1280 (VGQWVLLFLGVTLLVATMGLT). Residues 1281-1309 (QRLFSIRHQILRRTHRGPQFGSEVELRHS) lie on the Cytoplasmic side of the membrane. Ser1302 carries the post-translational modification Phosphoserine.

This sequence belongs to the peptidase M2 family. Monomer and homodimer; homodimerizes following binding to an inhibitor. Interacts with calmodulin (CALM1, CALM2 or CALM3); interaction takes place in the cytoplasmic region and regulates phosphorylation and proteolytic cleavage. Zn(2+) serves as cofactor. Requires chloride as cofactor. Produced following proteolytic cleavage by secretase enzymes that cleave the transmembrane form in the juxtamembrane stalk region upstream of the transmembrane region. Cleavage can take place at different sites of the juxtamembrane stalk region. Post-translationally, phosphorylated by CK2 on Ser-1302; which allows membrane retention. Phosphorylated on tyrosine residues on its extracellular part, promoting cleavage by secretase enzymes and formation of the soluble form (Angiotensin-converting enzyme, soluble form).

The protein localises to the cell membrane. It is found in the cytoplasm. The protein resides in the secreted. It catalyses the reaction Release of a C-terminal dipeptide, oligopeptide-|-Xaa-Yaa, when Xaa is not Pro, and Yaa is neither Asp nor Glu. Thus, conversion of angiotensin I to angiotensin II, with increase in vasoconstrictor activity, but no action on angiotensin II.. The enzyme catalyses angiotensin I + H2O = L-histidyl-L-leucine + angiotensin II. It carries out the reaction bradykinin + H2O = L-Phe-L-Arg + bradykinin(1-7). The catalysed reaction is substance P + H2O = substance P(1-9) + L-Leu-L-Met-NH2. It catalyses the reaction substance P + H2O = substance P(1-8) + Gly-L-Leu-L-Met-NH2. The enzyme catalyses substance P + H2O = L-Phe-L-Phe-Gly-L-Leu-L-Met-NH2 + substance P(1-6). It carries out the reaction neurotensin + H2O = neurotensin(1-11) + L-isoleucyl-L-leucine. The catalysed reaction is goralatide + H2O = N-acetyl-L-seryl-L-aspartate + L-lysyl-L-proline. It catalyses the reaction Met-enkephalin + H2O = L-phenylalanyl-L-methionine + L-tyrosylglycylglycine. The enzyme catalyses Leu-enkephalin + H2O = L-tyrosylglycylglycine + L-phenylalanyl-L-leucine. It carries out the reaction Met-enkephalin-Arg-Phe + H2O = L-arginyl-L-phenylalanine + Met-enkephalin. With respect to regulation, the dipeptidyl carboxypeptidase activity is strongly activated by chloride. The dipeptidyl carboxypeptidase activity is specifically inhibited by lisinopril, captopril and enalaprilat. Dipeptidyl carboxypeptidase that removes dipeptides from the C-terminus of a variety of circulating hormones, such as angiotensin I, bradykinin or enkephalins, thereby playing a key role in the regulation of blood pressure, electrolyte homeostasis or synaptic plasticity. Composed of two similar catalytic domains, each possessing a functional active site, with different selectivity for substrates. Plays a major role in the angiotensin-renin system that regulates blood pressure and sodium retention by the kidney by converting angiotensin I to angiotensin II, resulting in an increase of the vasoconstrictor activity of angiotensin. Also able to inactivate bradykinin, a potent vasodilator, and therefore enhance the blood pressure response. Acts as a regulator of synaptic transmission by mediating cleavage of neuropeptide hormones, such as substance P, neurotensin or enkephalins. Catalyzes degradation of different enkephalin neuropeptides (Met-enkephalin, Leu-enkephalin, Met-enkephalin-Arg-Phe and possibly Met-enkephalin-Arg-Gly-Leu). Acts as a regulator of synaptic plasticity in the nucleus accumbens of the brain by mediating cleavage of Met-enkephalin-Arg-Phe, a strong ligand of Mu-type opioid receptor OPRM1, into Met-enkephalin. Met-enkephalin-Arg-Phe cleavage by ACE decreases activation of OPRM1, leading to long-term synaptic potentiation of glutamate release. Also acts as a regulator of hematopoietic stem cell differentiation by mediating degradation of hemoregulatory peptide N-acetyl-SDKP (AcSDKP). Acts as a regulator of cannabinoid signaling pathway by mediating degradation of hemopressin, an antagonist peptide of the cannabinoid receptor CNR1. Involved in amyloid-beta metabolism by catalyzing degradation of Amyloid-beta protein 40 and Amyloid-beta protein 42 peptides, thereby preventing plaque formation. Catalyzes cleavage of cholecystokinin (maturation of Cholecystokinin-8 and Cholecystokinin-5) and Gonadoliberin-1 (both maturation and degradation) hormones. Degradation of hemoregulatory peptide N-acetyl-SDKP (AcSDKP) and amyloid-beta proteins is mediated by the N-terminal catalytic domain, while angiotensin I and cholecystokinin cleavage is mediated by the C-terminal catalytic region. Functionally, soluble form that is released in blood plasma and other body fluids following proteolytic cleavage in the juxtamembrane stalk region. This is Angiotensin-converting enzyme from Sus scrofa (Pig).